The chain runs to 607 residues: Cyclic-di-GMP receptor FimW (607 aa).

The segment at 323–492 (ERTFQRTQGQ…GGTQMGIEMI (170 aa)) is pilZ-like domain. The short motif at 324–328 (RTFQR) is the RXXXR motif element. A D/NXSXXG motif motif is present at residues 435–440 (NHSPGG). Positions 568-582 (SQFEYRSAEPVNTPS) are enriched in polar residues. Residues 568 to 607 (SQFEYRSAEPVNTPSDKPVTAPVARPPAGEEDFDSLWKSL) form a disordered region.

Monomer in the absence of c-di-GMP. Forms dimers in the presence of c-di-GMP.

It localises to the cytoplasm. In terms of biological role, high-affinity cyclic-di-GMP binding protein that regulates type IV pili (T4P) elongation. Required for T4P-mediated surface attachment and walking motility during the early phases of surface colonization. Not required for twitching motility. Does not bind related nucleotides such as GMP, GDP, GTP or ATP. In Pseudomonas aeruginosa (strain ATCC 15692 / DSM 22644 / CIP 104116 / JCM 14847 / LMG 12228 / 1C / PRS 101 / PAO1), this protein is Cyclic-di-GMP receptor FimW.